A 351-amino-acid polypeptide reads, in one-letter code: Uroporphyrinogen decarboxylase (351 aa).

Residues 25–29, D74, Y151, S206, and H325 contribute to the substrate site; that span reads RQAGR.

This sequence belongs to the uroporphyrinogen decarboxylase family. Homodimer.

The protein localises to the cytoplasm. It carries out the reaction uroporphyrinogen III + 4 H(+) = coproporphyrinogen III + 4 CO2. The protein operates within porphyrin-containing compound metabolism; protoporphyrin-IX biosynthesis; coproporphyrinogen-III from 5-aminolevulinate: step 4/4. Functionally, catalyzes the decarboxylation of four acetate groups of uroporphyrinogen-III to yield coproporphyrinogen-III. This chain is Uroporphyrinogen decarboxylase, found in Chlorobium chlorochromatii (strain CaD3).